The sequence spans 490 residues: Transcription factor MYB101 (490 aa).

The segment at 1–21 (MDGGGETTATATMEGRGLKKG) is disordered. HTH myb-type domains are found at residues 15–67 (GRGL…ANHL) and 68–122 (RPNL…KRRQ). 2 DNA-binding regions (H-T-H motif) span residues 43–67 (WNAVQKNSGLLRCGKSCRLRWANHL) and 95–118 (WARMASQLPGRTDNEIKNYWNTRM). Residues 168–206 (YTNSSNTSSSSSSFSSSSSQPSKRLRPDPLVSTNPGLNP) are disordered. A compositionally biased stretch (low complexity) spans 169–186 (TNSSNTSSSSSSFSSSSS).

Present mostly in flowers, siliques and floral shoot tips. Expression is restricted to the subapical pith cells of both vegetative and flowering plants and to the hypocotyl hook. Expressed in pollen grains and pollen tube. Mostly expressed in mature pollen grains, and, to a lower extent, in inflorescences and siliques.

It localises to the nucleus. In terms of biological role, transcription activator. Binds to 5'-CAACTGTC-3' and/or 5'-TAACAAA-3' motif in target gene promoter (e.g. alpha-amylase) to promote their expression. Positive regulator of abscisic acid (ABA) responses leading to growth arrest during seed germination. Promotes the expression of aleurone-related genes (e.g. CP1, CP, GASA1, BXL1 and BXL2) in seeds. Together with MYB33 and MYB65, promotes the programmed cell death (PCD) leading to vacuolation of protein storage vacuoles (PSVs) in the aleurone layers during seed germination. Maybe involved in the regulation of leaves lamina morphogenesis. Involved in pollen grain development. Together with MYB97 and MYB120, functions as a male factor that controls pollen tube-synergid interaction in fertilization. Required for pollen tube growth arrest and sperm cell release in the female gametophyte, probably via the regulation of pollen tube-specific gene expression. The protein is Transcription factor MYB101 of Arabidopsis thaliana (Mouse-ear cress).